A 122-amino-acid chain; its full sequence is MIQVQTELLVADNTGAKRIECIKVLGGSKRRYASIGDTIVIAVKEALPKGKVKKGSVHKAVVVRVKKGIHREDGSKVRFDNNAAVLVDDKGEPVGTRIFGPVTRELRSRGQMKIISLAPEVL.

Belongs to the universal ribosomal protein uL14 family. In terms of assembly, part of the 50S ribosomal subunit. Forms a cluster with proteins L3 and L19. In the 70S ribosome, L14 and L19 interact and together make contacts with the 16S rRNA in bridges B5 and B8.

In terms of biological role, binds to 23S rRNA. Forms part of two intersubunit bridges in the 70S ribosome. The sequence is that of Large ribosomal subunit protein uL14 from Pelagibacter ubique (strain HTCC1062).